The primary structure comprises 345 residues: Serine/arginine-rich splicing factor 6 (345 aa).

Residues 1 to 72 (MPRVYIGRLS…ERVIVEHARG (72 aa)) form the RRM 1 domain. Phosphoserine is present on residues Ser-45, Ser-81, and Ser-84. The disordered stretch occupies residues 75–102 (RDRDGYSYGSRSGGGGYSSRRTSGRDKY). An RRM 2 domain is found at 110–183 (FRLIVENLSS…RNIRLIEDKP (74 aa)). An N6-acetyllysine modification is found at Lys-165. The segment at 176 to 345 (IRLIEDKPRT…RSRSRSSSRD (170 aa)) is disordered. Lys-182 is covalently cross-linked (Glycyl lysine isopeptide (Lys-Gly) (interchain with G-Cter in SUMO2)). The span at 185–250 (TSHRRSYSGS…RKSRSKSKSK (66 aa)) shows a compositional bias: basic residues. 2 stretches are compositionally biased toward basic and acidic residues: residues 264–273 (RSKDEYEKSR) and 282–293 (SPKENGKGDIKS). 2 positions are modified to phosphoserine: Ser-299 and Ser-301. Phosphoserine; by DYRK1A is present on Ser-305. Phosphoserine occurs at positions 316 and 318. Residues 323–345 (RASRSHSRSRSKSRSRSRSSSRD) show a composition bias toward basic residues.

This sequence belongs to the splicing factor SR family. Binds SREK1/SFRS12. Interacts with DYRK1A. In terms of processing, extensively phosphorylated on serine residues in the RS domain. Phosphorylated by DYRK1A, probably in the RS domain. Phosphorylation by DYRK1A modulates alternative splice site selection and inhibits the expression of MAPT/Tau exon 10.

The protein localises to the nucleus. The protein resides in the nucleus speckle. In terms of biological role, plays a role in constitutive splicing and modulates the selection of alternative splice sites. Plays a role in the alternative splicing of MAPT/Tau exon 10. Binds to alternative exons of TNC pre-mRNA and promotes the expression of alternatively spliced TNC. Plays a role in wound healing and in the regulation of keratinocyte differentiation and proliferation via its role in alternative splicing. The protein is Serine/arginine-rich splicing factor 6 (SRSF6) of Bos taurus (Bovine).